A 230-amino-acid chain; its full sequence is Probable septum site-determining protein MinC (230 aa).

It belongs to the MinC family. Interacts with MinD and FtsZ.

Functionally, cell division inhibitor that blocks the formation of polar Z ring septums. Rapidly oscillates between the poles of the cell to destabilize FtsZ filaments that have formed before they mature into polar Z rings. Prevents FtsZ polymerization. This chain is Probable septum site-determining protein MinC, found in Cronobacter sakazakii (strain ATCC BAA-894) (Enterobacter sakazakii).